The following is a 491-amino-acid chain: Probable cytosol aminopeptidase (491 aa).

Mn(2+) contacts are provided by Lys261 and Asp266. The active site involves Lys273. Residues Asp284, Asp343, and Glu345 each coordinate Mn(2+). Arg347 is a catalytic residue.

Belongs to the peptidase M17 family. Requires Mn(2+) as cofactor.

It localises to the cytoplasm. The catalysed reaction is Release of an N-terminal amino acid, Xaa-|-Yaa-, in which Xaa is preferably Leu, but may be other amino acids including Pro although not Arg or Lys, and Yaa may be Pro. Amino acid amides and methyl esters are also readily hydrolyzed, but rates on arylamides are exceedingly low.. It catalyses the reaction Release of an N-terminal amino acid, preferentially leucine, but not glutamic or aspartic acids.. Its function is as follows. Presumably involved in the processing and regular turnover of intracellular proteins. Catalyzes the removal of unsubstituted N-terminal amino acids from various peptides. In Geobacter sp. (strain M21), this protein is Probable cytosol aminopeptidase.